The sequence spans 1262 residues: Protein stoned-B (1262 aa).

4 short sequence motifs (NPF) span residues 3–5 (NPF), 19–21 (NPF), 33–35 (NPF), and 43–45 (NPF). The disordered stretch occupies residues 17–36 (AANPFLMQSEPEPSSDNPFM). Residues 49 to 189 (ADDLELGAEP…DVSVDSGSSA (141 aa)) form a disordered region. Over residues 50-60 (DDLELGAEPEA) the composition is skewed to acidic residues. The segment covering 101 to 111 (PPQSQPQLQSH) has biased composition (low complexity). Over residues 115-124 (HPPPPRPLVP) the composition is skewed to pro residues. The span at 128-145 (TQDLISTVSSQLDETSSE) shows a compositional bias: polar residues. The segment covering 172–189 (DSGLADLLDVSVDSGSSA) has biased composition (low complexity). Residues 210–212 (NPF) carry the NPF 5 motif. 2 disordered regions span residues 225-452 (VPLP…SPPT) and 474-507 (EEMDTGLDFPLASSGQLSANPFASPDEEEPNFAP). A compositionally biased stretch (pro residues) spans 233–272 (KQPPRPPPPRPAPPRPAPPGQAAPQRPPPPLAAVNPPPAA). Residues 325-345 (DLDETIGEGEPPEQEEPDTEQ) are compositionally biased toward acidic residues. Polar residues predominate over residues 384 to 401 (QVNNMAAPSGTASTQRAT). Over residues 417–429 (DDEDEPEAMQEPE) the composition is skewed to acidic residues. Positions 493-495 (NPF) match the NPF 6 motif. Residues S623 and S626 each carry the phosphoserine modification. The segment at 643–709 (SGVAPQLAPP…QDTPQTPLYD (67 aa)) is disordered. Positions 673-675 (NPF) match the NPF 7 motif. The SHD domain occupies 728–902 (GWEMQLRQPN…KIPALRERAL (175 aa)). The segment at 847–1108 (KEFGSDLKKL…KGIERILGAV (262 aa)) is interaction with Syt. Residues 906 to 1219 (MEEVQVTAVD…ARHEYKVGIE (314 aa)) form the MHD domain. The tract at residues 1226 to 1262 (TNAYLAATRPIREEPPTTATKPTASPVAPSDSDTDSN) is disordered. Over residues 1241-1254 (PTTATKPTASPVAP) the composition is skewed to low complexity.

The protein belongs to the Stoned B family. As to quaternary structure, interacts with the second C2 domain of Syt.

Its subcellular location is the cytoplasm. It localises to the synapse. Its function is as follows. Adapter protein involved in endocytic recycling of synaptic vesicles membranes. May act by mediating the retrieval of synaptotagmin protein Syt from the plasma membrane, thereby facilitating the internalization of multiple synaptic vesicles from the plasma membrane. The polypeptide is Protein stoned-B (stnB) (Drosophila melanogaster (Fruit fly)).